Consider the following 178-residue polypeptide: CDP-diacylglycerol--glycerol-3-phosphate 3-phosphatidyltransferase (178 aa).

A run of 4 helical transmembrane segments spans residues 28-48 (LSSL…GFFA), 88-108 (LIFF…IFLI), 125-145 (LFVS…VNFL), and 147-167 (ILTN…WVDY).

Belongs to the CDP-alcohol phosphatidyltransferase class-I family.

The protein resides in the cell membrane. The enzyme catalyses a CDP-1,2-diacyl-sn-glycerol + sn-glycerol 3-phosphate = a 1,2-diacyl-sn-glycero-3-phospho-(1'-sn-glycero-3'-phosphate) + CMP + H(+). The protein operates within phospholipid metabolism; phosphatidylglycerol biosynthesis; phosphatidylglycerol from CDP-diacylglycerol: step 1/2. Its function is as follows. This protein catalyzes the committed step to the synthesis of the acidic phospholipids. This chain is CDP-diacylglycerol--glycerol-3-phosphate 3-phosphatidyltransferase (pgsA), found in Aquifex aeolicus (strain VF5).